Here is a 136-residue protein sequence, read N- to C-terminus: S-protein homolog 17 (136 aa).

A signal peptide spans 1–22 (MKNLSIFMFVFSLCMFGHVSRA).

Belongs to the plant self-incompatibility (S1) protein family.

The protein localises to the secreted. The sequence is that of S-protein homolog 17 from Arabidopsis thaliana (Mouse-ear cress).